A 72-amino-acid chain; its full sequence is Small proline-rich protein 2B (72 aa).

Positions 1–11 (MSYQQQQCKQP) are enriched in low complexity. Residues 1 to 20 (MSYQQQQCKQPCQPPPVCPT) are disordered. 3 consecutive repeat copies span residues 21 to 29 (PKCPEPCPP), 30 to 38 (PKCPEPCPP), and 39 to 47 (PKCPQPCPP). The tract at residues 21-47 (PKCPEPCPPPKCPEPCPPPKCPQPCPP) is 3 X 9 AA tandem repeats of P-K-C-P-[EQ]-P-C-P-P. A disordered region spans residues 42-72 (PQPCPPQQCQQKYPPVTPSPPCQPKYPPKSK). The segment covering 56-72 (PVTPSPPCQPKYPPKSK) has biased composition (pro residues).

Belongs to the cornifin (SPRR) family. In terms of tissue distribution, suprabasal layers of squamous-differentiated tissues such as epidermis, esophagus, tongue and trachea.

The protein resides in the cytoplasm. Cross-linked envelope protein of keratinocytes. It is a keratinocyte protein that first appears in the cell cytosol, but ultimately becomes cross-linked to membrane proteins by transglutaminase. All that results in the formation of an insoluble envelope beneath the plasma membrane. In Homo sapiens (Human), this protein is Small proline-rich protein 2B (SPRR2B).